Reading from the N-terminus, the 620-residue chain is Chaperone protein HscA homolog (620 aa).

The protein belongs to the heat shock protein 70 family.

In terms of biological role, chaperone involved in the maturation of iron-sulfur cluster-containing proteins. Has a low intrinsic ATPase activity which is markedly stimulated by HscB. The protein is Chaperone protein HscA homolog of Neisseria meningitidis serogroup B (strain ATCC BAA-335 / MC58).